A 279-amino-acid polypeptide reads, in one-letter code: Prepilin leader peptidase/N-methyltransferase (279 aa).

Residues 1 to 16 lie on the Periplasmic side of the membrane; the sequence is MDDLREFAQLFPAWWF. A helical transmembrane segment spans residues 17 to 35; that stretch reads GALGVLGLIVGSFLNVVIY. The Cytoplasmic segment spans residues 36-104; it reads RLPIMLERRW…RSRCCHQSVS (69 aa). Residues 105-123 form a helical membrane-spanning segment; sequence VQYPLVEVITMLAFLAAGL. The Periplasmic portion of the chain corresponds to 124–130; it reads LWLPGMA. The chain crosses the membrane as a helical span at residues 131-149; the sequence is LWGALILLSFLLVLTVIDI. At 150 to 163 the chain is on the cytoplasmic side; it reads KTLLLPDELTLSLL. Residues 164–182 traverse the membrane as a helical segment; sequence WMGLLFNLSGTFVSLNDAV. Residues 183–185 lie on the Periplasmic side of the membrane; sequence VGA. Residues 186–204 form a helical membrane-spanning segment; it reads MAGYLSLWLLYWAFKYATG. At 205–214 the chain is on the cytoplasmic side; it reads KEALGYGDFK. Residues 215 to 233 form a helical membrane-spanning segment; that stretch reads LLAALGAWLGWQALPNLVL. Topologically, residues 234–236 are periplasmic; sequence VAA. The chain crosses the membrane as a helical span at residues 237–254; sequence LSGLVVTLIWRGLRKEDT. The Cytoplasmic segment spans residues 255–257; sequence AKP. Residues 258–276 traverse the membrane as a helical segment; sequence LAFGPWLAIGGVFGMIMNG. Residues 277-279 lie on the Periplasmic side of the membrane; sequence FNL.

It belongs to the peptidase A24 family.

The protein localises to the cell inner membrane. It carries out the reaction Typically cleaves a -Gly-|-Phe- bond to release an N-terminal, basic peptide of 5-8 residues from type IV prepilin, and then N-methylates the new N-terminal amino group, the methyl donor being S-adenosyl-L-methionine.. Functionally, plays a role in type II pseudopili formation by proteolytically removing the leader sequence from substrate proteins and subsequently monomethylating the alpha-amino group of the newly exposed N-terminal phenylalanine. Substrates include proteins required for biogenesis of the type II general secretory apparatus. The polypeptide is Prepilin leader peptidase/N-methyltransferase (outO) (Pectobacterium carotovorum subsp. carotovorum (Erwinia carotovora subsp. carotovora)).